The following is an 846-amino-acid chain: Translation initiation factor IF-2 (846 aa).

The segment at tyrosine 198–lysine 219 is disordered. A compositionally biased stretch (basic residues) spans serine 207–lysine 219. The tr-type G domain maps to serine 345–glutamate 512. Positions glycine 354 to threonine 361 are G1. Residue glycine 354–threonine 361 coordinates GTP. A G2 region spans residues glycine 379–histidine 383. Residues aspartate 400–glycine 403 form a G3 region. GTP contacts are provided by residues aspartate 400 to histidine 404 and asparagine 454 to aspartate 457. Residues asparagine 454–aspartate 457 form a G4 region. Residues serine 490 to lysine 492 are G5.

The protein belongs to the TRAFAC class translation factor GTPase superfamily. Classic translation factor GTPase family. IF-2 subfamily.

It is found in the cytoplasm. Functionally, one of the essential components for the initiation of protein synthesis. Protects formylmethionyl-tRNA from spontaneous hydrolysis and promotes its binding to the 30S ribosomal subunits. Also involved in the hydrolysis of GTP during the formation of the 70S ribosomal complex. The protein is Translation initiation factor IF-2 of Francisella tularensis subsp. holarctica (strain OSU18).